The sequence spans 191 residues: Protein GrpE (191 aa).

Positions 1-13 (MSEKKNKKEKLAE) are enriched in basic and acidic residues. Residues 1 to 40 (MSEKKNKKEKLAEEIEQEELNSLDESVETVEEEATEETLT) are disordered. Residues 14-40 (EIEQEELNSLDESVETVEEEATEETLT) show a composition bias toward acidic residues.

This sequence belongs to the GrpE family. Homodimer.

The protein resides in the cytoplasm. Functionally, participates actively in the response to hyperosmotic and heat shock by preventing the aggregation of stress-denatured proteins, in association with DnaK and GrpE. It is the nucleotide exchange factor for DnaK and may function as a thermosensor. Unfolded proteins bind initially to DnaJ; upon interaction with the DnaJ-bound protein, DnaK hydrolyzes its bound ATP, resulting in the formation of a stable complex. GrpE releases ADP from DnaK; ATP binding to DnaK triggers the release of the substrate protein, thus completing the reaction cycle. Several rounds of ATP-dependent interactions between DnaJ, DnaK and GrpE are required for fully efficient folding. In Listeria innocua serovar 6a (strain ATCC BAA-680 / CLIP 11262), this protein is Protein GrpE.